A 341-amino-acid polypeptide reads, in one-letter code: Small ribosomal subunit biogenesis GTPase RsgA (341 aa).

The CP-type G domain occupies 112-268 (RQQLIAANLD…LIDTPGMREL (157 aa)). GTP-binding positions include 157-160 (TKVD) and 210-218 (GSSGAGKST). Zn(2+) is bound by residues Cys-290, Cys-295, His-297, and Cys-303.

Belongs to the TRAFAC class YlqF/YawG GTPase family. RsgA subfamily. As to quaternary structure, monomer. Associates with 30S ribosomal subunit, binds 16S rRNA. The cofactor is Zn(2+).

The protein resides in the cytoplasm. One of several proteins that assist in the late maturation steps of the functional core of the 30S ribosomal subunit. Helps release RbfA from mature subunits. May play a role in the assembly of ribosomal proteins into the subunit. Circularly permuted GTPase that catalyzes slow GTP hydrolysis, GTPase activity is stimulated by the 30S ribosomal subunit. The sequence is that of Small ribosomal subunit biogenesis GTPase RsgA from Xylella fastidiosa (strain 9a5c).